We begin with the raw amino-acid sequence, 475 residues long: 3-isopropylmalate dehydratase large subunit (475 aa).

3 residues coordinate [4Fe-4S] cluster: Cys353, Cys414, and Cys417.

Belongs to the aconitase/IPM isomerase family. LeuC type 1 subfamily. As to quaternary structure, heterodimer of LeuC and LeuD. [4Fe-4S] cluster is required as a cofactor.

It catalyses the reaction (2R,3S)-3-isopropylmalate = (2S)-2-isopropylmalate. The protein operates within amino-acid biosynthesis; L-leucine biosynthesis; L-leucine from 3-methyl-2-oxobutanoate: step 2/4. Catalyzes the isomerization between 2-isopropylmalate and 3-isopropylmalate, via the formation of 2-isopropylmaleate. In Stutzerimonas stutzeri (strain A1501) (Pseudomonas stutzeri), this protein is 3-isopropylmalate dehydratase large subunit.